The primary structure comprises 418 residues: Cyclin-dependent kinase 15 (418 aa).

One can recognise a Protein kinase domain in the interval 84–369 (YLNLEKLGEG…AQDALLHPYF (286 aa)). Residues 90-98 (LGEGTYATV) and Lys-113 each bind ATP. Asp-205 serves as the catalytic Proton acceptor.

Belongs to the protein kinase superfamily. CMGC Ser/Thr protein kinase family. CDC2/CDKX subfamily. Requires Mg(2+) as cofactor.

It catalyses the reaction L-seryl-[protein] + ATP = O-phospho-L-seryl-[protein] + ADP + H(+). The enzyme catalyses L-threonyl-[protein] + ATP = O-phospho-L-threonyl-[protein] + ADP + H(+). In terms of biological role, serine/threonine-protein kinase involved in the control of the eukaryotic cell cycle, whose activity is controlled by an associated cyclin. The sequence is that of Cyclin-dependent kinase 15 (cdk15) from Danio rerio (Zebrafish).